The primary structure comprises 220 residues: Putative respiratory nitrate reductase subunit Rieske (220 aa).

The region spanning 118-206 (KAPTLLVRHA…ITVSSEGYLI (89 aa)) is the Rieske domain. 4 residues coordinate [2Fe-2S] cluster: C151, H153, C168, and H171. C156 and C170 are oxidised to a cystine.

As to quaternary structure, probable multiprotein complex; a catalytic heterodimer of an alpha and beta chain is proposed to associate with additional subunits involved in membrane attachment and electron transfer. The cofactor is [2Fe-2S] cluster.

The protein resides in the cell membrane. Functionally, the respiratory membrane-bound nitrate reductase enzyme complex plays a role in generation of metabolic energy by using nitrate as a terminal electron acceptor during anaerobic conditions. Proposed Rieske subunit involved in a protonmotive Q-cycle mechanism-based electron transfer electrons to the beta subunit. The polypeptide is Putative respiratory nitrate reductase subunit Rieske (narB) (Haloferax mediterranei (strain ATCC 33500 / DSM 1411 / JCM 8866 / NBRC 14739 / NCIMB 2177 / R-4) (Halobacterium mediterranei)).